Reading from the N-terminus, the 112-residue chain is UPF0060 membrane protein XOO1694 (112 aa).

4 consecutive transmembrane segments (helical) span residues 8–28 (LLLF…PYLW), 32–52 (GGSV…VWLL), 62–82 (VYAA…LWWV), and 92–112 (LLGA…PRSA).

This sequence belongs to the UPF0060 family.

Its subcellular location is the cell inner membrane. The chain is UPF0060 membrane protein XOO1694 from Xanthomonas oryzae pv. oryzae (strain MAFF 311018).